A 515-amino-acid polypeptide reads, in one-letter code: ATP synthase subunit alpha (515 aa).

An ATP-binding site is contributed by 169-176 (GDRQTGKT).

It belongs to the ATPase alpha/beta chains family. F-type ATPases have 2 components, CF(1) - the catalytic core - and CF(0) - the membrane proton channel. CF(1) has five subunits: alpha(3), beta(3), gamma(1), delta(1), epsilon(1). CF(0) has three main subunits: a(1), b(2) and c(9-12). The alpha and beta chains form an alternating ring which encloses part of the gamma chain. CF(1) is attached to CF(0) by a central stalk formed by the gamma and epsilon chains, while a peripheral stalk is formed by the delta and b chains.

The protein localises to the cell inner membrane. The enzyme catalyses ATP + H2O + 4 H(+)(in) = ADP + phosphate + 5 H(+)(out). Functionally, produces ATP from ADP in the presence of a proton gradient across the membrane. The alpha chain is a regulatory subunit. This chain is ATP synthase subunit alpha, found in Neisseria meningitidis serogroup C / serotype 2a (strain ATCC 700532 / DSM 15464 / FAM18).